The chain runs to 210 residues: Cytochrome c oxidase subunit 2 (210 aa).

Over 1-15 (MSFILTFWMIFLMDS) the chain is Mitochondrial intermembrane. A helical membrane pass occupies residues 16-36 (IIVLISFSIFLSVWICALIIA). The Mitochondrial matrix portion of the chain corresponds to 37-63 (TVLTVTKINNIYCTWDFISSKFIDTYW). A helical membrane pass occupies residues 64–84 (FVLGMMFILCLLLRLCLLLYF). Topologically, residues 85-210 (SCINFVSFDL…GFMPIVINFI (126 aa)) are mitochondrial intermembrane. Positions 157, 192, 194, 196, 200, and 203 each coordinate Cu cation. Glutamate 194 contributes to the Mg(2+) binding site.

This sequence belongs to the cytochrome c oxidase subunit 2 family. As to quaternary structure, component of the cytochrome c oxidase (complex IV, CIV), a multisubunit enzyme composed of a catalytic core of 3 subunits and several supernumerary subunits. The complex exists as a monomer or a dimer and forms supercomplexes (SCs) in the inner mitochondrial membrane with ubiquinol-cytochrome c oxidoreductase (cytochrome b-c1 complex, complex III, CIII). Requires Cu cation as cofactor.

Its subcellular location is the mitochondrion inner membrane. The enzyme catalyses 4 Fe(II)-[cytochrome c] + O2 + 8 H(+)(in) = 4 Fe(III)-[cytochrome c] + 2 H2O + 4 H(+)(out). Component of the cytochrome c oxidase, the last enzyme in the mitochondrial electron transport chain which drives oxidative phosphorylation. The respiratory chain contains 3 multisubunit complexes succinate dehydrogenase (complex II, CII), ubiquinol-cytochrome c oxidoreductase (cytochrome b-c1 complex, complex III, CIII) and cytochrome c oxidase (complex IV, CIV), that cooperate to transfer electrons derived from NADH and succinate to molecular oxygen, creating an electrochemical gradient over the inner membrane that drives transmembrane transport and the ATP synthase. Cytochrome c oxidase is the component of the respiratory chain that catalyzes the reduction of oxygen to water. Electrons originating from reduced cytochrome c in the intermembrane space (IMS) are transferred via the dinuclear copper A center (CU(A)) of subunit 2 and heme A of subunit 1 to the active site in subunit 1, a binuclear center (BNC) formed by heme A3 and copper B (CU(B)). The BNC reduces molecular oxygen to 2 water molecules using 4 electrons from cytochrome c in the IMS and 4 protons from the mitochondrial matrix. The sequence is that of Cytochrome c oxidase subunit 2 (COXII) from Trypanosoma brucei brucei.